We begin with the raw amino-acid sequence, 578 residues long: Proline--tRNA ligase (578 aa).

Belongs to the class-II aminoacyl-tRNA synthetase family. ProS type 1 subfamily. In terms of assembly, homodimer.

It is found in the cytoplasm. It carries out the reaction tRNA(Pro) + L-proline + ATP = L-prolyl-tRNA(Pro) + AMP + diphosphate. Its function is as follows. Catalyzes the attachment of proline to tRNA(Pro) in a two-step reaction: proline is first activated by ATP to form Pro-AMP and then transferred to the acceptor end of tRNA(Pro). As ProRS can inadvertently accommodate and process non-cognate amino acids such as alanine and cysteine, to avoid such errors it has two additional distinct editing activities against alanine. One activity is designated as 'pretransfer' editing and involves the tRNA(Pro)-independent hydrolysis of activated Ala-AMP. The other activity is designated 'posttransfer' editing and involves deacylation of mischarged Ala-tRNA(Pro). The misacylated Cys-tRNA(Pro) is not edited by ProRS. The protein is Proline--tRNA ligase of Paraburkholderia phymatum (strain DSM 17167 / CIP 108236 / LMG 21445 / STM815) (Burkholderia phymatum).